Here is an 87-residue protein sequence, read N- to C-terminus: Cell division topological specificity factor (87 aa).

This sequence belongs to the MinE family.

Functionally, prevents the cell division inhibition by proteins MinC and MinD at internal division sites while permitting inhibition at polar sites. This ensures cell division at the proper site by restricting the formation of a division septum at the midpoint of the long axis of the cell. This Vibrio parahaemolyticus serotype O3:K6 (strain RIMD 2210633) protein is Cell division topological specificity factor.